Here is a 361-residue protein sequence, read N- to C-terminus: Probable S-adenosylmethionine-dependent methyltransferase At5g38780 (361 aa).

Residues Y19, C64, N69, D106, L107, S135, and F136 each coordinate S-adenosyl-L-homocysteine. N174, E260, F262, and N263 together coordinate Mg(2+).

This sequence belongs to the methyltransferase superfamily. Type-7 methyltransferase family. As to quaternary structure, homodimer. Mg(2+) serves as cofactor.

This Arabidopsis thaliana (Mouse-ear cress) protein is Probable S-adenosylmethionine-dependent methyltransferase At5g38780.